The primary structure comprises 152 residues: Flagellar assembly factor FliW (152 aa).

Belongs to the FliW family. Interacts with translational regulator CsrA and flagellin(s).

It is found in the cytoplasm. Acts as an anti-CsrA protein, binds CsrA and prevents it from repressing translation of its target genes, one of which is flagellin. Binds to flagellin and participates in the assembly of the flagellum. This Caldicellulosiruptor saccharolyticus (strain ATCC 43494 / DSM 8903 / Tp8T 6331) protein is Flagellar assembly factor FliW.